The following is a 343-amino-acid chain: Beta-ketoacyl-[acyl-carrier-protein] synthase III 1 (343 aa).

Catalysis depends on residues Cys-122 and His-268. The ACP-binding stretch occupies residues 269-273; that stretch reads QANVR. The active site involves Asn-299.

This sequence belongs to the thiolase-like superfamily. FabH family. Homodimer.

Its subcellular location is the cytoplasm. The enzyme catalyses malonyl-[ACP] + acetyl-CoA + H(+) = 3-oxobutanoyl-[ACP] + CO2 + CoA. Its pathway is lipid metabolism; fatty acid biosynthesis. Functionally, essential enzyme that catalyzes the condensation reaction of fatty acid synthesis by the addition to an acyl acceptor of two carbons from malonyl-ACP. Catalyzes the first condensation reaction which initiates fatty acid synthesis and may therefore play a role in governing the total rate of fatty acid production. Possesses both acetoacetyl-ACP synthase and acetyl transacylase activities. Its substrate specificity determines the biosynthesis of branched-chain of fatty acids. This chain is Beta-ketoacyl-[acyl-carrier-protein] synthase III 1, found in Streptomyces coelicolor (strain ATCC BAA-471 / A3(2) / M145).